A 297-amino-acid chain; its full sequence is Homoserine kinase (297 aa).

82 to 92 contributes to the ATP binding site; that stretch reads PLTRGLGSSAS.

The protein belongs to the GHMP kinase family. Homoserine kinase subfamily.

It is found in the cytoplasm. It catalyses the reaction L-homoserine + ATP = O-phospho-L-homoserine + ADP + H(+). It functions in the pathway amino-acid biosynthesis; L-threonine biosynthesis; L-threonine from L-aspartate: step 4/5. Catalyzes the ATP-dependent phosphorylation of L-homoserine to L-homoserine phosphate. The protein is Homoserine kinase of Bacillus anthracis (strain CDC 684 / NRRL 3495).